Reading from the N-terminus, the 460-residue chain is Transcriptional regulatory protein UME1 (460 aa).

An NEE-box motif is present at residues 14 to 22 (NEEFKIWKK). WD repeat units lie at residues 233 to 271 (PGIK…KPLW), 276 to 316 (SLDG…ALGD), 339 to 379 (FYSE…AIYN), and 411 to 451 (GENN…VLDG).

In terms of assembly, component of the RPD3C(L) complex composed of at least ASH1, CTI6, DEP1, PHO23, RPD3, RXT2, RXT3, SAP30, SDS3, SIN3, UME1 and UME6. Component of the RPD3C(S) complex composed of at least EAF3, RCO1, RPD3, SIN3, and UME1. Interacts with RPD3.

It is found in the cytoplasm. The protein resides in the nucleus. Its function is as follows. Catalytic component of the RPD3 histone deacetylase complexes RPD3C(L) and RPD3C(S) responsible for the deacetylation of lysine residues on the N-terminal part of the core histones (H2A, H2B, H3 and H4). Histone deacetylation gives a tag for epigenetic repression and plays an important role in transcriptional regulation, cell cycle progression and developmental events. The polypeptide is Transcriptional regulatory protein UME1 (UME1) (Saccharomyces cerevisiae (strain ATCC 204508 / S288c) (Baker's yeast)).